Here is a 491-residue protein sequence, read N- to C-terminus: Trehalose-6-phosphate synthase (491 aa).

A D-glucose 6-phosphate-binding site is contributed by Arg22. A UDP-alpha-D-glucose-binding site is contributed by 42–43 (GG). The D-glucose 6-phosphate site is built by Tyr100 and Asp154. UDP-alpha-D-glucose is bound by residues Arg296 and Lys301. Arg334 contributes to the D-glucose 6-phosphate binding site. 399 to 403 (LVAKE) contacts UDP-alpha-D-glucose.

The protein belongs to the glycosyltransferase 20 family. As to quaternary structure, homotetramer.

It catalyses the reaction ADP-alpha-D-glucose + D-glucose 6-phosphate = alpha,alpha-trehalose 6-phosphate + ADP + H(+). It carries out the reaction CDP-alpha-D-glucose + D-glucose 6-phosphate = alpha,alpha-trehalose 6-phosphate + CDP + H(+). The catalysed reaction is GDP-alpha-D-glucose + D-glucose 6-phosphate = alpha,alpha-trehalose 6-phosphate + GDP + H(+). The enzyme catalyses TDP-alpha-D-glucose + D-glucose 6-phosphate = 5-methyl-UDP + alpha,alpha-trehalose 6-phosphate + H(+). It catalyses the reaction D-glucose 6-phosphate + UDP-alpha-D-glucose = alpha,alpha-trehalose 6-phosphate + UDP + H(+). It participates in glycan biosynthesis; trehalose biosynthesis. In terms of biological role, probably involved in the osmoprotection via the biosynthesis of trehalose and in the production of glycogen and alpha-glucan via the TreS-Pep2 branch involved in the biosynthesis of maltose-1-phosphate (M1P). Catalyzes the transfer of glucose from UDP-glucose (UDP-Glc) to D-glucose 6-phosphate (Glc-6-P) to form trehalose-6-phosphate. Probably also able to use ADP-Glc, CDP-Glc, GDP-Glc and TDP-Glc as glucosyl donors. The sequence is that of Trehalose-6-phosphate synthase from Mycolicibacterium vanbaalenii (strain DSM 7251 / JCM 13017 / BCRC 16820 / KCTC 9966 / NRRL B-24157 / PYR-1) (Mycobacterium vanbaalenii).